We begin with the raw amino-acid sequence, 461 residues long: Alcaligin biosynthesis enzyme (461 aa).

Residue 9 to 15 (VAIGIGP) participates in FAD binding.

This sequence belongs to the lysine N(6)-hydroxylase/L-ornithine N(5)-oxygenase family. FAD serves as cofactor.

The protein operates within siderophore biosynthesis; alcaligin biosynthesis. In Bordetella parapertussis (strain 12822 / ATCC BAA-587 / NCTC 13253), this protein is Alcaligin biosynthesis enzyme (alcA).